Here is a 1454-residue protein sequence, read N- to C-terminus: E3 ubiquitin-protein ligase substrate receptor MMS22 (1454 aa).

The disordered stretch occupies residues N159–H178. The segment at Y1201–T1454 is required for interaction with MMS1.

The protein belongs to the MMS22 family. As to quaternary structure, component of a cullin-RING ligase (CRL) composed of 4 subunits: the RING protein HRT1, the cullin RTT101, a linker protein MMS1, and the substrate receptor MMS22. This complex further interacts with RTT107 and CTF4 to form RTT101-MMS1-MMS22-RTT107 and RTT101-MMS1-MMS22-CTF4 complexes respectively. Interacts (via C-ter) with MMS1 (via N-ter). Interacts with RTT107.

It is found in the nucleus. Substrate targeting component of a cullin-RING-based E3 ubiquitin-protein ligase complex RTT101(MMS1-MMS22). RTT101(MMS1-MMS22) promotes fork progression through damaged DNA or natural pause sites by stabilizing replication proteins like the replication fork-pausing complex (FPC) and leading-strand polymerase at stalled replication forks. RTT101(MMS1-MMS22) ubiquitinates the acetylated histones H3K56ac-H4 at lysine residues H3K121, H3K122 and H3K125. Ubiquitination is required for efficient histone deposition during replication-coupled nucleosome assembly, probably by facilitating the transfer of H3-H4 from ASF1 to other chaperones involved in histone deposition. In Saccharomyces cerevisiae (strain ATCC 204508 / S288c) (Baker's yeast), this protein is E3 ubiquitin-protein ligase substrate receptor MMS22 (MMS22).